We begin with the raw amino-acid sequence, 85 residues long: UPF0386 protein Atu1321 (85 aa).

It belongs to the UPF0386 family.

This is UPF0386 protein Atu1321 from Agrobacterium fabrum (strain C58 / ATCC 33970) (Agrobacterium tumefaciens (strain C58)).